Consider the following 77-residue polypeptide: Acyl carrier protein (77 aa).

Residues Met1–Asn76 enclose the Carrier domain. O-(pantetheine 4'-phosphoryl)serine is present on Ser36.

It belongs to the acyl carrier protein (ACP) family. In terms of processing, 4'-phosphopantetheine is transferred from CoA to a specific serine of apo-ACP by AcpS. This modification is essential for activity because fatty acids are bound in thioester linkage to the sulfhydryl of the prosthetic group.

It is found in the cytoplasm. It functions in the pathway lipid metabolism; fatty acid biosynthesis. Its function is as follows. Carrier of the growing fatty acid chain in fatty acid biosynthesis. In Actinobacillus pleuropneumoniae serotype 5b (strain L20), this protein is Acyl carrier protein.